The following is a 435-amino-acid chain: Ribulose bisphosphate carboxylase large chain (435 aa).

Positions 104 and 154 each coordinate substrate. The active-site Proton acceptor is Lys-156. Lys-158 contacts substrate. Mg(2+) contacts are provided by Lys-182, Asp-184, and Glu-185. N6-carboxylysine is present on Lys-182. Catalysis depends on His-275, which acts as the Proton acceptor. Residues Arg-276, His-308, and Ser-360 each coordinate substrate.

It belongs to the RuBisCO large chain family. Type I subfamily. In terms of assembly, heterohexadecamer of 8 large chains and 8 small chains. Requires Mg(2+) as cofactor.

It is found in the plastid. Its subcellular location is the chloroplast. It catalyses the reaction 2 (2R)-3-phosphoglycerate + 2 H(+) = D-ribulose 1,5-bisphosphate + CO2 + H2O. The enzyme catalyses D-ribulose 1,5-bisphosphate + O2 = 2-phosphoglycolate + (2R)-3-phosphoglycerate + 2 H(+). In terms of biological role, ruBisCO catalyzes two reactions: the carboxylation of D-ribulose 1,5-bisphosphate, the primary event in carbon dioxide fixation, as well as the oxidative fragmentation of the pentose substrate in the photorespiration process. Both reactions occur simultaneously and in competition at the same active site. The polypeptide is Ribulose bisphosphate carboxylase large chain (Euglena pisciformis).